A 100-amino-acid chain; its full sequence is Large ribosomal subunit protein bL21 (100 aa).

It belongs to the bacterial ribosomal protein bL21 family. As to quaternary structure, part of the 50S ribosomal subunit. Contacts protein L20.

In terms of biological role, this protein binds to 23S rRNA in the presence of protein L20. The chain is Large ribosomal subunit protein bL21 from Corynebacterium urealyticum (strain ATCC 43042 / DSM 7109).